The following is a 28-amino-acid chain: M-ectatotoxin-Eb2c (28 aa).

Expressed by the venom gland.

It localises to the secreted. Its function is as follows. Antimicrobial peptide active against Gram-negative bacterium E.coli MH1 (MIC=3.5 uM) and P.aeruginosa PAO1 (MIC=10 uM) and against Gram-positive bacterium A.globiformis VKM Ac-1112 (MIC=1.25 uM). This is M-ectatotoxin-Eb2c from Ectatomma brunneum (Ant).